The chain runs to 436 residues: FAD-dependent monooxygenase pigN (436 aa).

FAD-binding residues include Glu40, Gly53, and Arg118. Residue Arg200 is part of the active site. Asp316 and Ala329 together coordinate FAD.

The protein belongs to the paxM FAD-dependent monooxygenase family. FAD is required as a cofactor.

It participates in secondary metabolite biosynthesis. In terms of biological role, FAD-dependent monooxygenase; part of the gene cluster that mediates the biosynthesis of azaphilone pigments (MonAzPs), a complex mixture of compounds with a common azaphilone skeleton very widely used as food colorants. Within the pathway, pigN hydroxylates the benzaldehyde M7PKS-1 intermediate at C-4 to form the pyran ring. The first step of the pathway is performed by the nrPKS pigA that forms the hexaketide precursor from successive condensations of five malonyl-CoA units, with a simple acetyl-CoA starter unit. The role of esterase pigG is not clear, but it may play at most a supplementary role in the formation of the benzaldehyde produced by the pigA nrPKS. This very reactive benzaldehyde is intercepted by the pigC ketoreductase that to provide the first stable enzyme-free MonAzPs intermediate, 6-(4-hydroxy-2-oxopentyl)-3-methyl-2,4-dioxocyclohexane carbaldehyde, also known as M7PKS-1. The FAD-dependent monooxygenase pigN hydroxylates M7PKS-1 at C-4, which triggers the formation of the pyran ring. PigJ, pigK and pigD are involved in the acetylation of the pyran ring. PigJ and pigK form the two subunits of a dedicated fungal FAS that produces the side chain fatty acyl moiety of MonAzPs and pigD transfers the fatty acyl chain to the C-4 alcohol. PigM and pigO are involved in the elimination of the omega-1 alcohol. PigM acts as an O-acetyltransferase that synthesizes the putative O-11 acetyl intermediate whereas pigO eliminates acetic acid to yield an intermediate with a C10(11) double bond. The dehydration of the C-11 alcohol followed by the reduction of the C6(7) double bond by the NAD(P)H-dependent oxidoreductase pigE increases the electrophilicity of the C-5 ketone of the resulting acyl benzopyran. This in turn sets up the C-5 ketone for an intramolecular Knoevenagel aldol condensation with the C-20 enol of the side chain. This condensation affords the characteristic linear tricyclic carbon skeletons of the yellow pigments that serve as the common precursors for the classical yellow pigments monascin and ankaflavin, orange pigments rubopunctatin and monascorubrin, and red pigments ribropunctamine and monascorubramine. The FAD-dependent oxidoreductase pigF is especially invoved in the biosynthesis of orange and red pigments via desaturation of C6(7). The polypeptide is FAD-dependent monooxygenase pigN (Monascus ruber (Mold)).